The following is a 152-amino-acid chain: Succinate dehydrogenase [ubiquinone] cytochrome b small subunit B, mitochondrial (152 aa).

The transit peptide at 1–21 (MATLLRVSSLCRANRASAFKS) directs the protein to the mitochondrion. The Mitochondrial matrix portion of the chain corresponds to 22–56 (LLIRPLPCLSQDLHMVQTSQIHTSPNHHAGSKAAS). Residues 57-78 (MHWTGERALSVALLGLLPAAYL) traverse the membrane as a helical segment. Residues 79-83 (YPGAA) lie on the Mitochondrial intermembrane side of the membrane. Residues 84–104 (MDYSLAAALTLHGHWGLGQVV) form a helical membrane-spanning segment. Histidine 95 contacts heme b. Topologically, residues 105 to 113 (TDYVHGETK) are mitochondrial matrix. Residue tyrosine 107 coordinates a ubiquinone. The helical transmembrane segment at 114–135 (IKMANTSLFALSALTFAGLCYF) threads the bilayer. The Mitochondrial intermembrane portion of the chain corresponds to 136–152 (NYHDVGICKAVAMLWSL).

This sequence belongs to the CybS family. As to quaternary structure, component of complex II composed of four subunits: the flavoprotein (FP) SDHA, iron-sulfur protein (IP) SDHB, and a cytochrome b560 composed of SDHC and SDHD.

Its subcellular location is the mitochondrion inner membrane. It functions in the pathway carbohydrate metabolism; tricarboxylic acid cycle. Functionally, membrane-anchoring subunit of succinate dehydrogenase (SDH) that is involved in complex II of the mitochondrial electron transport chain and is responsible for transferring electrons from succinate to ubiquinone (coenzyme Q). SDH also oxidizes malate to the non-canonical enol form of oxaloacetate, enol-oxaloacetate. Enol-oxaloacetate, which is a potent inhibitor of the succinate dehydrogenase activity, is further isomerized into keto-oxaloacetate. This is Succinate dehydrogenase [ubiquinone] cytochrome b small subunit B, mitochondrial (sdhd-b) from Xenopus laevis (African clawed frog).